Reading from the N-terminus, the 198-residue chain is ATP-dependent Clp protease proteolytic subunit 1 (198 aa).

The Nucleophile role is filled by S98. H123 is an active-site residue.

Belongs to the peptidase S14 family. In terms of assembly, fourteen ClpP subunits assemble into 2 heptameric rings which stack back to back to give a disk-like structure with a central cavity, resembling the structure of eukaryotic proteasomes.

It localises to the cytoplasm. The catalysed reaction is Hydrolysis of proteins to small peptides in the presence of ATP and magnesium. alpha-casein is the usual test substrate. In the absence of ATP, only oligopeptides shorter than five residues are hydrolyzed (such as succinyl-Leu-Tyr-|-NHMec, and Leu-Tyr-Leu-|-Tyr-Trp, in which cleavage of the -Tyr-|-Leu- and -Tyr-|-Trp bonds also occurs).. Cleaves peptides in various proteins in a process that requires ATP hydrolysis. Has a chymotrypsin-like activity. Plays a major role in the degradation of misfolded proteins. The sequence is that of ATP-dependent Clp protease proteolytic subunit 1 from Leptospira interrogans serogroup Icterohaemorrhagiae serovar copenhageni (strain Fiocruz L1-130).